A 109-amino-acid polypeptide reads, in one-letter code: Large ribosomal subunit protein uL24 (109 aa).

It belongs to the universal ribosomal protein uL24 family. In terms of assembly, part of the 50S ribosomal subunit.

Functionally, one of two assembly initiator proteins, it binds directly to the 5'-end of the 23S rRNA, where it nucleates assembly of the 50S subunit. In terms of biological role, one of the proteins that surrounds the polypeptide exit tunnel on the outside of the subunit. The polypeptide is Large ribosomal subunit protein uL24 (Legionella pneumophila (strain Corby)).